We begin with the raw amino-acid sequence, 73 residues long: Large ribosomal subunit protein bL31 (73 aa).

The protein belongs to the bacterial ribosomal protein bL31 family. Type A subfamily. As to quaternary structure, part of the 50S ribosomal subunit.

In terms of biological role, binds the 23S rRNA. The sequence is that of Large ribosomal subunit protein bL31 from Brucella abortus (strain 2308).